A 71-amino-acid polypeptide reads, in one-letter code: uncharacterized protein (71 aa).

A helical transmembrane segment spans residues 12 to 34 (YLYNYFSSTTSWLVFIILSLDTI).

It is found in the membrane. This is an uncharacterized protein from Schizosaccharomyces pombe (strain 972 / ATCC 24843) (Fission yeast).